Here is a 424-residue protein sequence, read N- to C-terminus: Probable ribonuclease FAU-1 (424 aa).

The protein belongs to the FAU-1 family.

Its function is as follows. Probable RNase involved in rRNA stability through maturation and/or degradation of precursor rRNAs. Binds to RNA in loop regions with AU-rich sequences. In Saccharolobus solfataricus (strain ATCC 35092 / DSM 1617 / JCM 11322 / P2) (Sulfolobus solfataricus), this protein is Probable ribonuclease FAU-1.